A 205-amino-acid chain; its full sequence is ATP-dependent Clp protease proteolytic subunit (205 aa).

The active-site Nucleophile is the S101. Residue H126 is part of the active site.

This sequence belongs to the peptidase S14 family. Component of the chloroplastic Clp protease core complex.

The protein localises to the plastid. The protein resides in the chloroplast stroma. It catalyses the reaction Hydrolysis of proteins to small peptides in the presence of ATP and magnesium. alpha-casein is the usual test substrate. In the absence of ATP, only oligopeptides shorter than five residues are hydrolyzed (such as succinyl-Leu-Tyr-|-NHMec, and Leu-Tyr-Leu-|-Tyr-Trp, in which cleavage of the -Tyr-|-Leu- and -Tyr-|-Trp bonds also occurs).. In terms of biological role, cleaves peptides in various proteins in a process that requires ATP hydrolysis. Has a chymotrypsin-like activity. Plays a major role in the degradation of misfolded proteins. This chain is ATP-dependent Clp protease proteolytic subunit, found in Pinus contorta (Shore pine).